The chain runs to 129 residues: Small ribosomal subunit protein uS11 (129 aa).

It belongs to the universal ribosomal protein uS11 family. As to quaternary structure, part of the 30S ribosomal subunit. Interacts with proteins S7 and S18. Binds to IF-3.

Located on the platform of the 30S subunit, it bridges several disparate RNA helices of the 16S rRNA. Forms part of the Shine-Dalgarno cleft in the 70S ribosome. In Yersinia pseudotuberculosis serotype O:1b (strain IP 31758), this protein is Small ribosomal subunit protein uS11.